A 335-amino-acid polypeptide reads, in one-letter code: uncharacterized protein (335 aa).

The signal sequence occupies residues 1-21 (MDKKARAHTVIVCLVGALSLA). Cysteine 22 carries N-palmitoyl cysteine lipidation. Cysteine 22 is lipidated: S-diacylglycerol cysteine.

The protein resides in the cell membrane. This is an uncharacterized protein from Treponema pallidum (strain Nichols).